The sequence spans 371 residues: Capsular polysaccharide phosphotransferase cps12A (371 aa).

This sequence belongs to the stealth family.

Functionally, part of a capsular polysaccharide synthesis locus. The sequence is that of Capsular polysaccharide phosphotransferase cps12A (cps12A) from Actinobacillus pleuropneumoniae (Haemophilus pleuropneumoniae).